Consider the following 429-residue polypeptide: CinA-like protein (429 aa).

The protein belongs to the CinA family.

The polypeptide is CinA-like protein (Prochlorococcus marinus (strain MIT 9313)).